Consider the following 3841-residue polypeptide: Transformation/transcription domain-associated protein (3841 aa).

2 disordered regions span residues 491-516 and 2002-2027; these read TPTV…PPAT and QQPE…MKRG. Residues 498 to 515 show a composition bias toward pro residues; sequence ALPPPAPPTPVTPAPPPA. Positions 2025 to 2040 match the Bipartite nuclear localization signal motif; it reads KRGMSVDSAQDVKRFR. The FAT domain maps to 2671–3239; sequence VLKYLGKTHN…YFPIRTLYLT (569 aa). The interval 3249–3271 is disordered; it reads KSDSGQQQPSSAAAQTHSASDPG. Positions 3251-3268 are enriched in low complexity; the sequence is DSGQQQPSSAAAQTHSAS. A PI3K/PI4K catalytic domain is found at 3482–3805; that stretch reads MPRVEIVQKH…AVTAIMTRLH (324 aa). Residues 3488–3494 form a G-loop region; that stretch reads VQKHNTA. The segment at 3669–3677 is catalytic loop; the sequence is HLNRLNPEM. An activation loop region spans residues 3689–3714; that stretch reads VSYFRFDINDATGDLDANRPVPFRLT. The 33-residue stretch at 3809–3841 folds into the FATC domain; that stretch reads QFEGGESKVNTLVAAANSLDNLCRMDPAWHPWL.

The protein belongs to the PI3/PI4-kinase family. TRA1 subfamily.

It localises to the nucleus. Its function is as follows. Adapter protein, which is found in various multiprotein chromatin complexes with histone acetyltransferase activity (HAT), which gives a specific tag for epigenetic transcription activation. May be required for the mitotic checkpoint and normal cell cycle progression. May play a role in the formation and maintenance of the auditory system. The sequence is that of Transformation/transcription domain-associated protein from Danio rerio (Zebrafish).